A 671-amino-acid chain; its full sequence is Putative glycoside hydrolase BT_3595 (671 aa).

Residues 1–24 form the signal peptide; that stretch reads MITGIISILCYLQCFGTLSASVTA.

It belongs to the glycoside hydrolase-like 3 (GHL3) family.

In Bacteroides thetaiotaomicron (strain ATCC 29148 / DSM 2079 / JCM 5827 / CCUG 10774 / NCTC 10582 / VPI-5482 / E50), this protein is Putative glycoside hydrolase BT_3595.